The following is a 131-amino-acid chain: Large ribosomal subunit protein bL17 (131 aa).

This sequence belongs to the bacterial ribosomal protein bL17 family. In terms of assembly, part of the 50S ribosomal subunit. Contacts protein L32.

This chain is Large ribosomal subunit protein bL17, found in Burkholderia mallei (strain NCTC 10229).